The chain runs to 178 residues: Matrix-remodeling-associated protein 7 (178 aa).

Residues 7-27 traverse the membrane as a helical segment; it reads LLAALPALVTALALLLAWLLL. The tract at residues 33 to 121 is disordered; the sequence is RVPAPESTAS…AFSFKYSPGQ (89 aa). The span at 48-65 shows a compositional bias: pro residues; it reads APAPPEPPESCAPEPAPE. Residues 76–85 are compositionally biased toward acidic residues; sequence PEESEAEEPA. Phosphoserine is present on residues serine 79 and serine 165.

It is found in the membrane. The sequence is that of Matrix-remodeling-associated protein 7 (Mxra7) from Mus musculus (Mouse).